Here is a 399-residue protein sequence, read N- to C-terminus: Elongation factor Tu (399 aa).

Positions 10-204 (KPHVNIGTIG…AVDANIPEPV (195 aa)) constitute a tr-type G domain. Residues 19–26 (GHVDHGKT) form a G1 region. 19–26 (GHVDHGKT) is a binding site for GTP. Thr26 lines the Mg(2+) pocket. The interval 60–64 (GITIN) is G2. The G3 stretch occupies residues 81-84 (DCPG). GTP-binding positions include 81-85 (DCPGH) and 136-139 (NKCD). Residues 136–139 (NKCD) form a G4 region. The segment at 174–176 (SGL) is G5.

This sequence belongs to the TRAFAC class translation factor GTPase superfamily. Classic translation factor GTPase family. EF-Tu/EF-1A subfamily. In terms of assembly, monomer.

The protein resides in the cytoplasm. It carries out the reaction GTP + H2O = GDP + phosphate + H(+). Its function is as follows. GTP hydrolase that promotes the GTP-dependent binding of aminoacyl-tRNA to the A-site of ribosomes during protein biosynthesis. This chain is Elongation factor Tu, found in Synechococcus sp. (strain RCC307).